A 335-amino-acid chain; its full sequence is MSLDINQIALHQLIKRDEQNLELVLRDSLLEPTETVVEMVAELHRVYSAKNKAYGLFSEESELAQTLRLQRQGEEDFLAFSRAATGRLRDELAKYPFADGGFVLFCHYRYLAVEYLLVAVLSNLSSMRVNENLDINPTHYLDINHADIVARIDLTEWETNPESTRYLTFLKGRVGRKVADFFMDFLGASEGLNTKAQNRGLLQAVDDFTAEAQLDKAERQNVRQQVYSYCNEQLQAGEEIELESLSKELAGVSEVSFTEFAAEKGYELEESFPADRSTLRQLTKFAGSGGGLTINFDAMLLGERIFWEPATDTLTIKGTPPNLRDQLQRRTSGGN.

This sequence belongs to the YejK family.

The protein resides in the cytoplasm. It localises to the nucleoid. This is Nucleoid-associated protein YejK from Shigella sonnei (strain Ss046).